Here is a 300-residue protein sequence, read N- to C-terminus: Ornithine carbamoyltransferase (300 aa).

Carbamoyl phosphate is bound by residues 51 to 54 (STRT), Gln-78, Arg-102, and 129 to 132 (HPCQ). L-ornithine contacts are provided by residues Asn-160, Asp-217, and 221 to 222 (SM). Carbamoyl phosphate contacts are provided by residues 257–258 (CL) and Arg-285.

The protein belongs to the aspartate/ornithine carbamoyltransferase superfamily. OTCase family.

It localises to the cytoplasm. The enzyme catalyses carbamoyl phosphate + L-ornithine = L-citrulline + phosphate + H(+). Its pathway is amino-acid biosynthesis; L-arginine biosynthesis; L-arginine from L-ornithine and carbamoyl phosphate: step 1/3. Reversibly catalyzes the transfer of the carbamoyl group from carbamoyl phosphate (CP) to the N(epsilon) atom of ornithine (ORN) to produce L-citrulline. In Halorhodospira halophila (strain DSM 244 / SL1) (Ectothiorhodospira halophila (strain DSM 244 / SL1)), this protein is Ornithine carbamoyltransferase.